Consider the following 158-residue polypeptide: Ribosome maturation factor RimP (158 aa).

It belongs to the RimP family.

The protein localises to the cytoplasm. Its function is as follows. Required for maturation of 30S ribosomal subunits. This Aquifex aeolicus (strain VF5) protein is Ribosome maturation factor RimP.